A 108-amino-acid polypeptide reads, in one-letter code: Tetrahydromethanopterin S-methyltransferase subunit B (108 aa).

Residues 79-99 (GMFFGFWVTMAILVLVTILAV) form a helical membrane-spanning segment.

It belongs to the MtrB family. The complex is composed of 8 subunits; MtrA, MtrB, MtrC, MtrD, MtrE, MtrF, MtrG and MtrH.

It is found in the cell membrane. It carries out the reaction 5-methyl-5,6,7,8-tetrahydromethanopterin + coenzyme M + 2 Na(+)(in) = 5,6,7,8-tetrahydromethanopterin + methyl-coenzyme M + 2 Na(+)(out). The protein operates within one-carbon metabolism; methanogenesis from CO(2); methyl-coenzyme M from 5,10-methylene-5,6,7,8-tetrahydromethanopterin: step 2/2. In terms of biological role, part of a complex that catalyzes the formation of methyl-coenzyme M and tetrahydromethanopterin from coenzyme M and methyl-tetrahydromethanopterin. This is an energy-conserving, sodium-ion translocating step. This Methanococcus maripaludis (strain C7 / ATCC BAA-1331) protein is Tetrahydromethanopterin S-methyltransferase subunit B.